A 74-amino-acid chain; its full sequence is Ferredoxin-like protein in nif region (74 aa).

The region spanning 2–30 (PFKIIASQCTSCSACEPLCPNVAISEKGG) is the 4Fe-4S ferredoxin-type domain. [4Fe-4S] cluster-binding residues include Cys-10, Cys-13, Cys-16, Cys-20, Cys-39, Cys-51, and Cys-55.

The cofactor is [4Fe-4S] cluster.

The polypeptide is Ferredoxin-like protein in nif region (frxA) (Bradyrhizobium diazoefficiens (strain JCM 10833 / BCRC 13528 / IAM 13628 / NBRC 14792 / USDA 110)).